The primary structure comprises 258 residues: HVA22-like protein j (258 aa).

Positions 153-258 are disordered; it reads AANQPPTERN…RSNSRTQPAA (106 aa). The span at 156-169 shows a compositional bias: polar residues; sequence QPPTERNVNMNAQS. Residues 206–215 show a composition bias toward pro residues; that stretch reads WPPPTPPPTP.

The protein belongs to the DP1 family.

The sequence is that of HVA22-like protein j (HVA22J) from Arabidopsis thaliana (Mouse-ear cress).